The primary structure comprises 122 residues: UPF0102 protein xcc-b100_3645 (122 aa).

Belongs to the UPF0102 family.

The polypeptide is UPF0102 protein xcc-b100_3645 (Xanthomonas campestris pv. campestris (strain B100)).